A 208-amino-acid chain; its full sequence is Protein-L-isoaspartate O-methyltransferase (208 aa).

S59 is an active-site residue.

This sequence belongs to the methyltransferase superfamily. L-isoaspartyl/D-aspartyl protein methyltransferase family.

Its subcellular location is the cytoplasm. The enzyme catalyses [protein]-L-isoaspartate + S-adenosyl-L-methionine = [protein]-L-isoaspartate alpha-methyl ester + S-adenosyl-L-homocysteine. In terms of biological role, catalyzes the methyl esterification of L-isoaspartyl residues in peptides and proteins that result from spontaneous decomposition of normal L-aspartyl and L-asparaginyl residues. It plays a role in the repair and/or degradation of damaged proteins. In Aliivibrio salmonicida (strain LFI1238) (Vibrio salmonicida (strain LFI1238)), this protein is Protein-L-isoaspartate O-methyltransferase.